The following is a 388-amino-acid chain: F-box protein ETP2 (388 aa).

Residues 2-48 form the F-box domain; that stretch reads KTIQEQLPNDLVEEILCRVPATSLRRLRSTCKAWNRLFKGDRILASK.

As to quaternary structure, interacts with EIN2 (via C-terminus).

Negative regulator of EIN2 protein stability. In Arabidopsis thaliana (Mouse-ear cress), this protein is F-box protein ETP2.